Here is a 455-residue protein sequence, read N- to C-terminus: Mu-like prophage FluMu DNA circularization protein (455 aa).

A DNA-binding region (H-T-H motif) is located at residues 368–387 (VILDNADAEQWTSYAALEQY).

It to phage Mu protein N.

This chain is Mu-like prophage FluMu DNA circularization protein, found in Haemophilus influenzae (strain ATCC 51907 / DSM 11121 / KW20 / Rd).